A 659-amino-acid polypeptide reads, in one-letter code: Cysteine-rich receptor-like protein kinase 7 (659 aa).

The signal sequence occupies residues 1 to 23 (MSSLFPFIFLFLFSFLTSFRASA). Over 24–273 (QDPRFLAYYC…SLSDKSGNSN (250 aa)) the chain is Extracellular. Gnk2-homologous domains follow at residues 27 to 131 (RFLA…HKNI) and 142 to 244 (FILR…LYDF). N-linked (GlcNAc...) asparagine glycans are attached at residues Asn-35, Asn-42, Asn-60, Asn-69, and Asn-103. Asn-246 carries an N-linked (GlcNAc...) asparagine glycan. The chain crosses the membrane as a helical span at residues 274–294 (VVVVAVVVPIIVAVLIFIAGY). Residues 295–659 (CFFAKRAKKT…DKSMSDLDPR (365 aa)) lie on the Cytoplasmic side of the membrane. The Protein kinase domain maps to 336-622 (FSENNKIGRG…ALPAPQQPGF (287 aa)). Residues 342–350 (IGRGGFGDV) and Lys-364 contribute to the ATP site. At Tyr-409 the chain carries Phosphotyrosine. The Proton acceptor role is filled by Asp-461. Ser-465 is subject to Phosphoserine. Thr-501 bears the Phosphothreonine mark. Tyr-509 is modified (phosphotyrosine). The interval 626–659 (SRPGTNRLDSDQSTTNKSVTVSIDDKSMSDLDPR) is disordered. The span at 636–646 (DQSTTNKSVTV) shows a compositional bias: polar residues. Over residues 648–659 (IDDKSMSDLDPR) the composition is skewed to basic and acidic residues.

It belongs to the protein kinase superfamily. Ser/Thr protein kinase family. CRK subfamily.

Its subcellular location is the membrane. It catalyses the reaction L-seryl-[protein] + ATP = O-phospho-L-seryl-[protein] + ADP + H(+). It carries out the reaction L-threonyl-[protein] + ATP = O-phospho-L-threonyl-[protein] + ADP + H(+). The chain is Cysteine-rich receptor-like protein kinase 7 (CRK7) from Arabidopsis thaliana (Mouse-ear cress).